The following is a 200-amino-acid chain: 3-isopropylmalate dehydratase small subunit (200 aa).

It belongs to the LeuD family. LeuD type 1 subfamily. Heterodimer of LeuC and LeuD.

The catalysed reaction is (2R,3S)-3-isopropylmalate = (2S)-2-isopropylmalate. It participates in amino-acid biosynthesis; L-leucine biosynthesis; L-leucine from 3-methyl-2-oxobutanoate: step 2/4. Functionally, catalyzes the isomerization between 2-isopropylmalate and 3-isopropylmalate, via the formation of 2-isopropylmaleate. The sequence is that of 3-isopropylmalate dehydratase small subunit from Saccharopolyspora erythraea (strain ATCC 11635 / DSM 40517 / JCM 4748 / NBRC 13426 / NCIMB 8594 / NRRL 2338).